The primary structure comprises 65 residues: Large ribosomal subunit protein uL29 (65 aa).

Belongs to the universal ribosomal protein uL29 family.

The protein is Large ribosomal subunit protein uL29 of Methylococcus capsulatus (strain ATCC 33009 / NCIMB 11132 / Bath).